A 621-amino-acid polypeptide reads, in one-letter code: Altered inheritance of mitochondria protein 9, mitochondrial (621 aa).

A mitochondrion-targeting transit peptide spans 1–40 (MIRSTTAKLGKRCATLRVRASPILRPLVATRCITNKADEV).

Belongs to the AIM9 family.

Its subcellular location is the mitochondrion. This chain is Altered inheritance of mitochondria protein 9, mitochondrial (AIM9), found in Zygosaccharomyces rouxii (strain ATCC 2623 / CBS 732 / NBRC 1130 / NCYC 568 / NRRL Y-229).